The sequence spans 416 residues: UPF0761 membrane protein Rfer_2991 (416 aa).

6 helical membrane passes run 60–80 (MALV…PMFA), 117–137 (LGGA…LTID), 156–176 (VLVY…SLSI), 187–207 (VVGV…FFMV), 222–242 (WVKW…LELA), and 268–288 (ILLI…VIAA).

It belongs to the UPF0761 family.

The protein resides in the cell inner membrane. The sequence is that of UPF0761 membrane protein Rfer_2991 from Albidiferax ferrireducens (strain ATCC BAA-621 / DSM 15236 / T118) (Rhodoferax ferrireducens).